The primary structure comprises 571 residues: Proline--tRNA ligase (571 aa).

The protein belongs to the class-II aminoacyl-tRNA synthetase family. ProS type 1 subfamily. In terms of assembly, homodimer.

It is found in the cytoplasm. It catalyses the reaction tRNA(Pro) + L-proline + ATP = L-prolyl-tRNA(Pro) + AMP + diphosphate. Its function is as follows. Catalyzes the attachment of proline to tRNA(Pro) in a two-step reaction: proline is first activated by ATP to form Pro-AMP and then transferred to the acceptor end of tRNA(Pro). As ProRS can inadvertently accommodate and process non-cognate amino acids such as alanine and cysteine, to avoid such errors it has two additional distinct editing activities against alanine. One activity is designated as 'pretransfer' editing and involves the tRNA(Pro)-independent hydrolysis of activated Ala-AMP. The other activity is designated 'posttransfer' editing and involves deacylation of mischarged Ala-tRNA(Pro). The misacylated Cys-tRNA(Pro) is not edited by ProRS. The sequence is that of Proline--tRNA ligase from Shewanella baltica (strain OS195).